The chain runs to 107 residues: Heme-degrading monooxygenase (107 aa).

The ABM domain maps to 2–94; sequence IIVTNTTKIT…YILDNKIAYY (93 aa). Fe cation is bound at residue Asn-6. His-76 contributes to the heme binding site.

This sequence belongs to the antibiotic biosynthesis monooxygenase family. Heme-degrading monooxygenase IsdG subfamily. Homodimer.

The protein localises to the cytoplasm. It catalyses the reaction heme b + 3 reduced [NADPH--hemoprotein reductase] + 3 O2 = biliverdin IXalpha + CO + Fe(2+) + 3 oxidized [NADPH--hemoprotein reductase] + 3 H2O + H(+). Allows bacterial pathogens to use the host heme as an iron source. Catalyzes the oxidative degradation of the heme macrocyclic porphyrin ring to the biliverdin in the presence of a suitable electron donor such as ascorbate or NADPH--cytochrome P450 reductase, with subsequent release of free iron. This chain is Heme-degrading monooxygenase, found in Bacillus mycoides (strain KBAB4) (Bacillus weihenstephanensis).